We begin with the raw amino-acid sequence, 2000 residues long: Sodium channel protein type 3 subunit alpha (2000 aa).

Topologically, residues 1-128 (MAQALLVPPG…KIAIKILVHS (128 aa)) are cytoplasmic. The interval 28–60 (RAAEEKAKKPKKEQDNDDENKPKPNSDLEAGKN) is disordered. Residues 46-57 (ENKPKPNSDLEA) are compositionally biased toward basic and acidic residues. The stretch at 110-455 (ILTPLNPVRK…QQMLEQLKKQ (346 aa)) is one I repeat. The chain crosses the membrane as a helical span at residues 129-146 (LFSMLIMCTILTNCVFMT). Topologically, residues 147–152 (LSNPPD) are extracellular. A helical membrane pass occupies residues 153 to 174 (WTKNVEYTFTGIYTFESLIKIL). The Cytoplasmic portion of the chain corresponds to 175 to 188 (ARGFCLEDFTFLRD). Residues 189-206 (PWNWLDFSVIVMAYVTEF) traverse the membrane as a helical segment. Residues 207 to 213 (VSLGNVS) lie on the Extracellular side of the membrane. An N-linked (GlcNAc...) asparagine glycan is attached at Asn211. The chain crosses the membrane as a helical span at residues 214–235 (ALRTFRVLRALKTISVIPGLKT). Topologically, residues 236–249 (IVGALIQSVKKLSD) are cytoplasmic. Residues 250–269 (VMILTVFCLSVFALIGLQLF) traverse the membrane as a helical segment. Over 270–369 (MGNLRNKCLQ…NYGYTSFDTF (100 aa)) the chain is Extracellular. Asn290, Asn296, Asn302, Asn307, and Asn339 each carry an N-linked (GlcNAc...) asparagine glycan. The pore-forming intramembrane region spans 370 to 386 (SWAFLSLFRLMTQDYWE). The Extracellular segment spans residues 387 to 397 (NLYQLTLRAAG). Residues 398–424 (KTYMIFFVLVIFLGSFYLVNLILAVVA) form a helical membrane-spanning segment. Over 425–761 (MAYEEQNQAT…LVNLIVMDPF (337 aa)) the chain is Cytoplasmic. Ser484, Ser485, and Ser486 each carry phosphoserine. Disordered stretches follow at residues 493-528 (SKSAKEWRNRRKKRRQREHLEGNNKGERDSFPKSES), 587-631 (VGSE…ASMS), and 662-681 (ALTSPTGQLPPEGTTTETEV). Residues 500-509 (RNRRKKRRQR) show a composition bias toward basic residues. Basic and acidic residues-rich tracts occupy residues 510 to 528 (EHLEGNNKGERDSFPKSES) and 596 to 610 (DEHSTFEDSESRRDS). Residues 662-678 (ALTSPTGQLPPEGTTTE) show a composition bias toward polar residues. The II repeat unit spans residues 742 to 1014 (CCDAWLKVKH…QIAVGRMQKG (273 aa)). The chain crosses the membrane as a helical span at residues 762-779 (VDLAITICIVLNTLFMAM). At 780–787 (EHYPMTEQ) the chain is on the extracellular side. The chain crosses the membrane as a helical span at residues 788 to 812 (FSSVLTVGNLVFTGIFTAEMVLKII). Residues 813–822 (AMDPYYYFQE) are Cytoplasmic-facing. The chain crosses the membrane as a helical span at residues 823 to 842 (GWNIFDGIIVSLSLMELGLS). The Extracellular portion of the chain corresponds to 843–846 (NVEG). The helical transmembrane segment at 847-865 (LSVLRSFRLLRVFKLAKSW) threads the bilayer. The Cytoplasmic portion of the chain corresponds to 866–883 (PTLNMLIKIIGNSVGALG). A helical membrane pass occupies residues 884–904 (NLTLVLAIIVFIFAVVGMQLF). Residues 905–929 (GKSYKECVCKINDDCTLPRWHMNDF) are Extracellular-facing. Residues Cys913 and Cys919 are joined by a disulfide bond. Positions 930 to 945 (FHSFLIVFRVLCGEWI) form an intramembrane region, pore-forming. At 946–956 (ETMWDCMEVAG) the chain is on the extracellular side. An intrachain disulfide couples Cys951 to Cys960. Residues 957–983 (QTMCLIVFMLVMVIGNLVVLNLFLALL) form a helical membrane-spanning segment. Residues 984–1205 (LSSFSSDNLA…RKTCYSIVEH (222 aa)) are Cytoplasmic-facing. Positions 1118 to 1162 (EEFSSESELEESKEKLNATSSSEGSTVDVVLPREGEQAETEPEED) are disordered. The stretch at 1188-1499 (KGKIWWNLRK…KKYYNAMKKL (312 aa)) is one III repeat. The helical transmembrane segment at 1206–1226 (NWFETFIVFMILLSSGALAFE) threads the bilayer. Residues 1227-1238 (DIYIEQRKTIKT) lie on the Extracellular side of the membrane. A helical membrane pass occupies residues 1239–1260 (MLEYADKVFTYIFILEMLLKWV). Residues 1261-1266 (AYGFQT) are Cytoplasmic-facing. A helical transmembrane segment spans residues 1267–1292 (YFTNAWCWLDFLIVDVSLVSLVANAL). The Extracellular segment spans residues 1293-1301 (GYSELGAIK). Residues 1302–1320 (SLRTLRALRPLRALSRFEG) traverse the membrane as a helical segment. Residues 1321–1333 (MRVVVNALVGAIP) are Cytoplasmic-facing. Residues 1334-1356 (SIMNVLLVCLIFWLIFSIMGVNL) form a helical membrane-spanning segment. At 1357–1402 (FAGKFYHCVNMTTGNMFDISDVNNLSDCQALGKQARWKNVKVNFDN) the chain is on the extracellular side. A disulfide bridge links Cys1364 with Cys1384. Asn1366 and Asn1380 each carry an N-linked (GlcNAc...) asparagine glycan. The pore-forming intramembrane region spans 1403 to 1419 (VGAGYLALLQVATFKGW). The Extracellular segment spans residues 1420-1442 (MDIMYAAVDSRDVKLQPVYEENL). Residues 1443-1468 (YMYLYFVIFIIFGSFFTLNLFIGVII) traverse the membrane as a helical segment. Over 1469–1526 (DNFNQQKKKFGGQDIFMTEEQKKYYNAMKKLGSKKPQKPIPRPANKFQGMVFDFVTRQ) the chain is Cytoplasmic. Ser1501 carries the post-translational modification Phosphoserine; by PKC. The IV repeat unit spans residues 1508 to 1806 (IPRPANKFQG…WEKFDPDATQ (299 aa)). The helical transmembrane segment at 1527–1545 (VFDISIMILICLNMVTMMV) threads the bilayer. At 1546–1553 (ETDDQGKY) the chain is on the extracellular side. A helical transmembrane segment spans residues 1554–1577 (MTLVLSRINLVFIVLFTGEFVLKL). Residues 1578 to 1587 (VSLRHYYFTI) are Cytoplasmic-facing. A helical membrane pass occupies residues 1588–1605 (GWNIFDFVVVILSIVGMF). Over 1606-1617 (LAEMIEKYFVSP) the chain is Extracellular. The chain crosses the membrane as a helical span at residues 1618 to 1640 (TLFRVIRLARIGRILRLIKGAKG). Over 1641 to 1653 (IRTLLFALMMSLP) the chain is Cytoplasmic. The chain crosses the membrane as a helical span at residues 1654–1677 (ALFNIGLLLFLVMFIYAIFGMSNF). At 1678–1699 (AYVKKEAGIDDMFNFETFGNSM) the chain is on the extracellular side. The pore-forming intramembrane region spans 1700-1712 (ICLFQITTSAGWD). The Extracellular segment spans residues 1713–1744 (GLLAPILNSAPPDCDPDTIHPGSSVKGDCGNP). The helical transmembrane segment at 1745 to 1770 (SVGIFFFVSYIIISFLVVVNMYIAVI) threads the bilayer. At 1771–2000 (LENFSVATEE…KGKEVRENQK (230 aa)) the chain is on the cytoplasmic side. The 30-residue stretch at 1900–1929 (EEVSAAIIQRNFRCYLLKQRLKNISSNYNK) folds into the IQ domain. Residues 1949 to 2000 (LNGNSTPEKTDGSSSTTSPPSYDSVTKPDKEKFEKDKPEKESKGKEVRENQK) form a disordered region. A compositionally biased stretch (basic and acidic residues) spans 1974-2000 (TKPDKEKFEKDKPEKESKGKEVRENQK).

It belongs to the sodium channel (TC 1.A.1.10) family. Nav1.3/SCN3A subfamily. As to quaternary structure, heterooligomer of an alpha subunit, SCN3A, and 1 to 3 regulatory beta subunits including SCN1B and SCN2B; disulfide-linked with some beta subunits like SCN2B. Interacts with NEDD4L; could regulate expression of SCN3A at the plasma membrane through ubiquitination-regulated endocytosis. Interacts with the conotoxin GVIIJ. Post-translationally, may be ubiquitinated by NEDD4L; which would promote its endocytosis. Phosphorylation at Ser-1501 by PKC in a highly conserved cytoplasmic loop slows inactivation of the sodium channel and reduces peak sodium currents. Expressed in enterochromaffin cells in both colon and small bowel (at protein level).

The protein resides in the cell membrane. It is found in the basal cell membrane. The enzyme catalyses Na(+)(in) = Na(+)(out). In terms of biological role, pore-forming subunit of Nav1.3, a voltage-gated sodium (Nav) channel that directly mediates the depolarizing phase of action potentials in excitable membranes. Navs, also called VGSCs (voltage-gated sodium channels) or VDSCs (voltage-dependent sodium channels), operate by switching between closed and open conformations depending on the voltage difference across the membrane. In the open conformation they allow Na(+) ions to selectively pass through the pore, along their electrochemical gradient. The influx of Na+ ions provokes membrane depolarization, initiating the propagation of electrical signals throughout cells and tissues. In some secretory cell types, it also participates in cell excitability through membrane depolarization and regulates cells responsiveness to stimuli triggering secretion. For instance, it controls the release of serotonin/5-hydroxytryptamine by enterochromaffin cells and is required for both glucagon- and glucose-induced insulin secretion in pancreatic endocrine cells. This Homo sapiens (Human) protein is Sodium channel protein type 3 subunit alpha.